A 384-amino-acid polypeptide reads, in one-letter code: Methylthioribose-1-phosphate isomerase (384 aa).

The active-site Proton donor is the Asp255.

This sequence belongs to the eIF-2B alpha/beta/delta subunits family. MtnA subfamily.

The protein resides in the cytoplasm. Its subcellular location is the nucleus. The catalysed reaction is 5-(methylsulfanyl)-alpha-D-ribose 1-phosphate = 5-(methylsulfanyl)-D-ribulose 1-phosphate. It participates in amino-acid biosynthesis; L-methionine biosynthesis via salvage pathway; L-methionine from S-methyl-5-thio-alpha-D-ribose 1-phosphate: step 1/6. Functionally, catalyzes the interconversion of methylthioribose-1-phosphate (MTR-1-P) into methylthioribulose-1-phosphate (MTRu-1-P). This Talaromyces stipitatus (strain ATCC 10500 / CBS 375.48 / QM 6759 / NRRL 1006) (Penicillium stipitatum) protein is Methylthioribose-1-phosphate isomerase (mri1).